Consider the following 196-residue polypeptide: Putative NADH dehydrogenase/NAD(P)H nitroreductase XOO4023 (196 aa).

It belongs to the nitroreductase family. HadB/RutE subfamily. It depends on FMN as a cofactor.

This Xanthomonas oryzae pv. oryzae (strain MAFF 311018) protein is Putative NADH dehydrogenase/NAD(P)H nitroreductase XOO4023.